The chain runs to 464 residues: Argininosuccinate lyase (464 aa).

Belongs to the lyase 1 family. Argininosuccinate lyase subfamily.

It is found in the cytoplasm. It catalyses the reaction 2-(N(omega)-L-arginino)succinate = fumarate + L-arginine. The protein operates within amino-acid biosynthesis; L-arginine biosynthesis; L-arginine from L-ornithine and carbamoyl phosphate: step 3/3. The polypeptide is Argininosuccinate lyase (Pseudomonas syringae pv. syringae (strain B728a)).